The chain runs to 195 residues: IMP cyclohydrolase (195 aa).

It belongs to the archaeal IMP cyclohydrolase family.

It catalyses the reaction IMP + H2O = 5-formamido-1-(5-phospho-D-ribosyl)imidazole-4-carboxamide. It participates in purine metabolism; IMP biosynthesis via de novo pathway; IMP from 5-formamido-1-(5-phospho-D-ribosyl)imidazole-4-carboxamide: step 1/1. In terms of biological role, catalyzes the cyclization of 5-formylamidoimidazole-4-carboxamide ribonucleotide to IMP. The sequence is that of IMP cyclohydrolase from Haloquadratum walsbyi (strain DSM 16790 / HBSQ001).